The sequence spans 479 residues: Aspartyl/glutamyl-tRNA(Asn/Gln) amidotransferase subunit B (479 aa).

It belongs to the GatB/GatE family. GatB subfamily. Heterotrimer of A, B and C subunits.

It carries out the reaction L-glutamyl-tRNA(Gln) + L-glutamine + ATP + H2O = L-glutaminyl-tRNA(Gln) + L-glutamate + ADP + phosphate + H(+). It catalyses the reaction L-aspartyl-tRNA(Asn) + L-glutamine + ATP + H2O = L-asparaginyl-tRNA(Asn) + L-glutamate + ADP + phosphate + 2 H(+). Its function is as follows. Allows the formation of correctly charged Asn-tRNA(Asn) or Gln-tRNA(Gln) through the transamidation of misacylated Asp-tRNA(Asn) or Glu-tRNA(Gln) in organisms which lack either or both of asparaginyl-tRNA or glutaminyl-tRNA synthetases. The reaction takes place in the presence of glutamine and ATP through an activated phospho-Asp-tRNA(Asn) or phospho-Glu-tRNA(Gln). The polypeptide is Aspartyl/glutamyl-tRNA(Asn/Gln) amidotransferase subunit B (Streptococcus suis (strain 98HAH33)).